Here is a 196-residue protein sequence, read N- to C-terminus: ATP-dependent Clp protease proteolytic subunit (196 aa).

S101 (nucleophile) is an active-site residue. H126 is a catalytic residue.

The protein belongs to the peptidase S14 family. In terms of assembly, component of the chloroplastic Clp protease core complex.

The protein resides in the plastid. The protein localises to the chloroplast stroma. The enzyme catalyses Hydrolysis of proteins to small peptides in the presence of ATP and magnesium. alpha-casein is the usual test substrate. In the absence of ATP, only oligopeptides shorter than five residues are hydrolyzed (such as succinyl-Leu-Tyr-|-NHMec, and Leu-Tyr-Leu-|-Tyr-Trp, in which cleavage of the -Tyr-|-Leu- and -Tyr-|-Trp bonds also occurs).. Functionally, cleaves peptides in various proteins in a process that requires ATP hydrolysis. Has a chymotrypsin-like activity. Plays a major role in the degradation of misfolded proteins. This Nicotiana tabacum (Common tobacco) protein is ATP-dependent Clp protease proteolytic subunit.